A 450-amino-acid chain; its full sequence is Zinc metalloproteinase nas-13 (450 aa).

A signal peptide spans 1–31 (MPSPTSSSASVFSSHLFFVFCIFSQIAQSYA). N-linked (GlcNAc...) asparagine glycosylation occurs at Asn68. The 194-residue stretch at 110-303 (NAVRQTYLKW…YKINMLYNCP (194 aa)) folds into the Peptidase M12A domain. Cystine bridges form between Cys152–Cys302 and Cys174–Cys193. His201 contributes to the Zn(2+) binding site. Glu202 is an active-site residue. The Zn(2+) site is built by His205 and His211. Asn225 carries an N-linked (GlcNAc...) asparagine glycan. The Cell attachment site signature appears at 349–351 (RGD). Intrachain disulfides connect Cys368/Cys404, Cys375/Cys397, Cys384/Cys401, Cys414/Cys450, Cys421/Cys443, and Cys430/Cys447. ShKT domains lie at 368-404 (CEDRRKDCEFLARAGHCESRFSIRFMTENCANSCGKC) and 414-450 (CEDARTWCERWANSGMCNQTVFKDYMRQKCAKSCNFC). The N-linked (GlcNAc...) asparagine glycan is linked to Asn431.

The cofactor is Zn(2+).

Its subcellular location is the secreted. In terms of biological role, metalloprotease. The sequence is that of Zinc metalloproteinase nas-13 (nas-13) from Caenorhabditis elegans.